A 339-amino-acid polypeptide reads, in one-letter code: Anthranilate phosphoribosyltransferase (339 aa).

5-phospho-alpha-D-ribose 1-diphosphate is bound by residues G80, 83 to 84, 90 to 93, 108 to 116, and S120; these read GD, NVST, and KHGNRSVTS. G80 is an anthranilate binding site. Residue S92 participates in Mg(2+) binding. N111 contributes to the anthranilate binding site. R166 is an anthranilate binding site. Residues D225 and E226 each coordinate Mg(2+).

The protein belongs to the anthranilate phosphoribosyltransferase family. Homodimer. Mg(2+) is required as a cofactor.

The enzyme catalyses N-(5-phospho-beta-D-ribosyl)anthranilate + diphosphate = 5-phospho-alpha-D-ribose 1-diphosphate + anthranilate. It functions in the pathway amino-acid biosynthesis; L-tryptophan biosynthesis; L-tryptophan from chorismate: step 2/5. In terms of biological role, catalyzes the transfer of the phosphoribosyl group of 5-phosphorylribose-1-pyrophosphate (PRPP) to anthranilate to yield N-(5'-phosphoribosyl)-anthranilate (PRA). The sequence is that of Anthranilate phosphoribosyltransferase from Ignicoccus hospitalis (strain KIN4/I / DSM 18386 / JCM 14125).